Consider the following 893-residue polypeptide: Alanine--tRNA ligase (893 aa).

Zn(2+) contacts are provided by histidine 574, histidine 578, cysteine 678, and histidine 682.

Belongs to the class-II aminoacyl-tRNA synthetase family. The cofactor is Zn(2+).

The protein resides in the cytoplasm. The catalysed reaction is tRNA(Ala) + L-alanine + ATP = L-alanyl-tRNA(Ala) + AMP + diphosphate. Functionally, catalyzes the attachment of alanine to tRNA(Ala) in a two-step reaction: alanine is first activated by ATP to form Ala-AMP and then transferred to the acceptor end of tRNA(Ala). Also edits incorrectly charged Ser-tRNA(Ala) and Gly-tRNA(Ala) via its editing domain. This is Alanine--tRNA ligase from Bifidobacterium longum (strain NCC 2705).